A 464-amino-acid polypeptide reads, in one-letter code: uncharacterized protein (464 aa).

A signal peptide spans 1–24 (MSRFVPRIIPFYLLLLVAGGTANA).

Belongs to the intimin/invasin family.

The protein resides in the periplasm. This is an uncharacterized protein from Escherichia coli (strain K12).